An 876-amino-acid chain; its full sequence is MSKSTAEIRQAFLDFFHSKGHQVVASSSLVPNNDPTLLFTNAGMNQFKDVFLGLDKRNYSRATTSQRCVRAGGKHNDLENVGYTARHHTFFEMLGNFSFGDYFKHDAIQFAWELLTGENWFALPKERLWVTVYETDDEAYEIWEKEVGIPRERIIRIGDNKGAPYASDNFWQMGDTGPCGPCTEIFYDHGDHIWGGPPGSPEEDGDRYIEIWNIVFMQFNRQADGTMEPLPKPSVDTGMGLERIAAVLQHVNSNYDIDLFRTLIEAVAKVTGSTDLGNKSLRVIADHIRSCAFLVADGVLPSNENRGYVLRRIIRRAVRHGNMLGAKETFFYKLVGPLIEVMGSAGEELKRQQAQVEQVLKTEEEQFARTLERGLALLDEELAKLQGDTLDGETAFRLYDTYGFPVDLTADVCRERNIKVDEAGFEAAMEEQRRRAREASGFGADYNAMIRVDSASEFKGYDHLELNGKVTALFVDGKAVEAINAGQEAVVVLDQTPFYAESGGQVGDKGELKGAGFTFAVDDTQKYGQAIGHLGKLSAGALKVGDAVQADVDEARRARIRLNHSATHLMHAALRQVLGTHVAQKGSLVSDKVLRFDFSHNEAMKPSEIREVEDLVNAQIRRNLPIETNIMDLDAAKAKGAMALFGEKYDERVRVLSMGDFSTELCGGTHASRTGDIGLFRIISESGTAAGIRRIEAVTGEGAMATVHAQSDRLNDIAHLLKGDSQNLGDKVRAVLERTRQLEKELQQLKDQAAAQESANLSSKAVDLNGVKLLVSELAGIEPKMLRTMVDDLKNQLGSTVIVLATVVEGKVSLIAGVSKDVTDRVKAGELIGMVAQQVGGKGGGRPDMAQAGGTDAAALPAALASVQGWVSAKLQ.

Zn(2+)-binding residues include H564, H568, C666, and H670.

Belongs to the class-II aminoacyl-tRNA synthetase family. As to quaternary structure, homotetramer. It depends on Zn(2+) as a cofactor.

It is found in the cytoplasm. It catalyses the reaction tRNA(Ala) + L-alanine + ATP = L-alanyl-tRNA(Ala) + AMP + diphosphate. Functionally, catalyzes the attachment of alanine to tRNA(Ala) in a two-step reaction: alanine is first activated by ATP to form Ala-AMP and then transferred to the acceptor end of tRNA(Ala). Also edits incorrectly charged Ser-tRNA(Ala) and Gly-tRNA(Ala) via its editing domain. This is Alanine--tRNA ligase from Salmonella typhi.